The chain runs to 107 residues: Small ribosomal subunit protein bS16m (107 aa).

The protein belongs to the bacterial ribosomal protein bS16 family. As to quaternary structure, component of the mitochondrial small ribosomal subunit (mt-SSU). Mature N.crassa 74S mitochondrial ribosomes consist of a small (37S) and a large (54S) subunit. The 37S small subunit contains a 16S ribosomal RNA (16S mt-rRNA) and 32 different proteins. The 54S large subunit contains a 23S rRNA (23S mt-rRNA) and 42 different proteins.

It is found in the mitochondrion. Component of the mitochondrial ribosome (mitoribosome), a dedicated translation machinery responsible for the synthesis of mitochondrial genome-encoded proteins, including at least some of the essential transmembrane subunits of the mitochondrial respiratory chain. The mitoribosomes are attached to the mitochondrial inner membrane and translation products are cotranslationally integrated into the membrane. This is Small ribosomal subunit protein bS16m (cyt-21) from Neurospora crassa (strain ATCC 24698 / 74-OR23-1A / CBS 708.71 / DSM 1257 / FGSC 987).